A 315-amino-acid chain; its full sequence is Ribosomal RNA small subunit methyltransferase H (315 aa).

S-adenosyl-L-methionine-binding positions include 37-39, Asp-57, Phe-83, Asp-105, and Gln-112; that span reads GGH.

Belongs to the methyltransferase superfamily. RsmH family.

The protein resides in the cytoplasm. The enzyme catalyses cytidine(1402) in 16S rRNA + S-adenosyl-L-methionine = N(4)-methylcytidine(1402) in 16S rRNA + S-adenosyl-L-homocysteine + H(+). Functionally, specifically methylates the N4 position of cytidine in position 1402 (C1402) of 16S rRNA. This Pseudomonas fluorescens (strain SBW25) protein is Ribosomal RNA small subunit methyltransferase H.